Consider the following 556-residue polypeptide: Tripartite motif-containing protein 16 (556 aa).

The disordered stretch occupies residues 1–60 (MAELDLIAPGPLTGVTAHPLAPLGPDPVSAIPVEKEDADPLSKSGEETQEQGHDPAELGA). Basic and acidic residues predominate over residues 33–56 (VEKEDADPLSKSGEETQEQGHDPA). 2 B box-type zinc fingers span residues 64-113 (EDQI…LTEP) and 117-156 (QDLR…STVS). At Ser-107 the chain carries Phosphoserine. Coiled-coil stretches lie at residues 163–266 (NKEV…RLAA) and 312–332 (NLIQ…REEE). Residue Ser-195 is modified to Phosphoserine. The B30.2/SPRY domain maps to 347-545 (YRTSKPEPRT…RIVDLGEEPE (199 aa)).

It belongs to the TRIM/RBCC family. In terms of assembly, homodimerizes via its coiled-coil domain. Heterodimerizes with MID1, TRIM24 and PML. Interacts with Galectin-3/LGALS3 in a ULK1-dependent manner; this interaction mediates autophagy of damage endomembranes. Interacts with BECN1. Interacts with ATG16L1. Interacts with p62/SQSTM and LC3B/MAP1LC3B. Post-translationally, phosphorylated by ULK1. In terms of processing, auto-ubiquitinates via its B-Boxes. In terms of tissue distribution, widely expressed. Expressed in basal keratinocytes.

It localises to the cytoplasm. The enzyme catalyses S-ubiquitinyl-[E2 ubiquitin-conjugating enzyme]-L-cysteine + [acceptor protein]-L-lysine = [E2 ubiquitin-conjugating enzyme]-L-cysteine + N(6)-ubiquitinyl-[acceptor protein]-L-lysine.. In terms of biological role, E3 ubiquitin ligase that plays an essential role in the organization of autophagic response and ubiquitination upon lysosomal and phagosomal damages. Plays a role in the stress-induced biogenesis and degradation of protein aggresomes by regulating the p62-KEAP1-NRF2 signaling and particularly by modulating the ubiquitination levels and thus stability of NRF2. Acts as a scaffold protein and facilitates autophagic degradation of protein aggregates by interacting with p62/SQSTM, ATG16L1 and LC3B/MAP1LC3B. In turn, protects the cell against oxidative stress-induced cell death as a consequence of endomembrane damage. The sequence is that of Tripartite motif-containing protein 16 (Trim16) from Mus musculus (Mouse).